The chain runs to 204 residues: Ubiquitin-conjugating enzyme E2 S (204 aa).

The UBC core domain occupies 14 to 160; sequence QIIKQVAREI…AKMFTEIHAK (147 aa). Residue C98 is the Glycyl thioester intermediate of the active site. The span at 165 to 176 shows a compositional bias: polar residues; sequence SSNNISEGQQES. The tract at residues 165 to 204 is disordered; that stretch reads SSNNISEGQQESLPGKKRVAVNEKMCDKKKKDKKRALKRL. Positions 191-204 are enriched in basic residues; the sequence is DKKKKDKKRALKRL.

Belongs to the ubiquitin-conjugating enzyme family.

It catalyses the reaction S-ubiquitinyl-[E1 ubiquitin-activating enzyme]-L-cysteine + [E2 ubiquitin-conjugating enzyme]-L-cysteine = [E1 ubiquitin-activating enzyme]-L-cysteine + S-ubiquitinyl-[E2 ubiquitin-conjugating enzyme]-L-cysteine.. It functions in the pathway protein modification; protein ubiquitination. In terms of biological role, catalyzes the covalent attachment of ubiquitin to other proteins. Acts as an essential factor of the anaphase promoting complex/cyclosome (APC/C), a cell cycle-regulated ubiquitin ligase that controls progression through mitosis. Acts by specifically elongating polyubiquitin chains initiated by the E2 enzyme UBCH10 on APC/C substrates, enhancing the degradation of APC/C substrates by the proteasome and promoting mitotic exit. In Nematostella vectensis (Starlet sea anemone), this protein is Ubiquitin-conjugating enzyme E2 S.